The chain runs to 501 residues: Lysine--tRNA ligase (501 aa).

Mg(2+) is bound by residues E411 and E418.

It belongs to the class-II aminoacyl-tRNA synthetase family. As to quaternary structure, homodimer. It depends on Mg(2+) as a cofactor.

The protein resides in the cytoplasm. The enzyme catalyses tRNA(Lys) + L-lysine + ATP = L-lysyl-tRNA(Lys) + AMP + diphosphate. This is Lysine--tRNA ligase from Shewanella woodyi (strain ATCC 51908 / MS32).